The primary structure comprises 519 residues: T-complex protein 11-like protein 2 (519 aa).

Residues 1–57 (MPFNGEKQCVSEDQPSDSDSSRFSESMASLSDYECSRQSFTSDSSSKSSSPASTSPP) form a disordered region. Serine 16 carries the phosphoserine modification. Low complexity-rich tracts occupy residues 17 to 29 (DSDS…SMAS) and 36 to 55 (SRQS…ASTS).

The protein belongs to the TCP11 family. In terms of assembly, interacts with FMNL2; this interaction promotes muscle-derived satellite cell (MDSC) migration and differentiation.

Its subcellular location is the cytoplasm. It is found in the cytoskeleton. Promotes the migration of muscle-derived satellite cells (MDSCs) during differentiation throught interaction with FMNL2 and therefore may participate in microfilament assembly. This chain is T-complex protein 11-like protein 2, found in Bos taurus (Bovine).